Here is a 480-residue protein sequence, read N- to C-terminus: Protein nucleotidyltransferase YdiU (480 aa).

The ATP site is built by Gly-86, Gly-88, Arg-89, Lys-109, Asp-121, Gly-122, Arg-172, and Arg-179. Asp-248 serves as the catalytic Proton acceptor. Mg(2+) is bound by residues Asn-249 and Asp-258. Residue Asp-258 coordinates ATP.

The protein belongs to the SELO family. It depends on Mg(2+) as a cofactor. Requires Mn(2+) as cofactor.

The enzyme catalyses L-seryl-[protein] + ATP = 3-O-(5'-adenylyl)-L-seryl-[protein] + diphosphate. It catalyses the reaction L-threonyl-[protein] + ATP = 3-O-(5'-adenylyl)-L-threonyl-[protein] + diphosphate. The catalysed reaction is L-tyrosyl-[protein] + ATP = O-(5'-adenylyl)-L-tyrosyl-[protein] + diphosphate. It carries out the reaction L-histidyl-[protein] + UTP = N(tele)-(5'-uridylyl)-L-histidyl-[protein] + diphosphate. The enzyme catalyses L-seryl-[protein] + UTP = O-(5'-uridylyl)-L-seryl-[protein] + diphosphate. It catalyses the reaction L-tyrosyl-[protein] + UTP = O-(5'-uridylyl)-L-tyrosyl-[protein] + diphosphate. Functionally, nucleotidyltransferase involved in the post-translational modification of proteins. It can catalyze the addition of adenosine monophosphate (AMP) or uridine monophosphate (UMP) to a protein, resulting in modifications known as AMPylation and UMPylation. This chain is Protein nucleotidyltransferase YdiU, found in Klebsiella pneumoniae (strain 342).